The sequence spans 349 residues: Protein RecA (349 aa).

ATP is bound at residue 65 to 72; the sequence is GPESSGKT. Residues 329-349 form a disordered region; it reads FDGDVDENENEDDSPKTLFDE. A compositionally biased stretch (acidic residues) spans 331–340; sequence GDVDENENED.

The protein belongs to the RecA family.

The protein localises to the cytoplasm. Functionally, can catalyze the hydrolysis of ATP in the presence of single-stranded DNA, the ATP-dependent uptake of single-stranded DNA by duplex DNA, and the ATP-dependent hybridization of homologous single-stranded DNAs. It interacts with LexA causing its activation and leading to its autocatalytic cleavage. The protein is Protein RecA of Staphylococcus epidermidis (strain ATCC 35984 / DSM 28319 / BCRC 17069 / CCUG 31568 / BM 3577 / RP62A).